Reading from the N-terminus, the 270-residue chain is Putative pyruvate, phosphate dikinase regulatory protein (270 aa).

Residue 149–156 (GVSRTSKT) participates in ADP binding.

Belongs to the pyruvate, phosphate/water dikinase regulatory protein family. PDRP subfamily.

It catalyses the reaction N(tele)-phospho-L-histidyl/L-threonyl-[pyruvate, phosphate dikinase] + ADP = N(tele)-phospho-L-histidyl/O-phospho-L-threonyl-[pyruvate, phosphate dikinase] + AMP + H(+). The enzyme catalyses N(tele)-phospho-L-histidyl/O-phospho-L-threonyl-[pyruvate, phosphate dikinase] + phosphate + H(+) = N(tele)-phospho-L-histidyl/L-threonyl-[pyruvate, phosphate dikinase] + diphosphate. Its function is as follows. Bifunctional serine/threonine kinase and phosphorylase involved in the regulation of the pyruvate, phosphate dikinase (PPDK) by catalyzing its phosphorylation/dephosphorylation. This is Putative pyruvate, phosphate dikinase regulatory protein from Sphingopyxis alaskensis (strain DSM 13593 / LMG 18877 / RB2256) (Sphingomonas alaskensis).